Reading from the N-terminus, the 260-residue chain is MGRARSGPKRHVKRLAAPYAWPIPRKEGGKFAPRPYPGPHTMDTSVPLLILVRDMLGYADYAREARKIITRGEIYVDGVVRKEPKFPVGIMDVVEIPRTGDRYRVVMNEHHRLDVVPISEEEARVKVCRIKNKTYVRGGNLQITMHDGKNWLVEIEDPTDPKEDVYSVGDSLVLELPEPDSGESWKVVDHIPFEEGVWVYAMTGRHSGEVGRVVEIQTFEGPQEDLITVENPEGDQFQTTKGRLIAIGKDEPLVTVRKEE.

Residues valine 46–histidine 111 enclose the S4 RNA-binding domain.

It belongs to the eukaryotic ribosomal protein eS4 family.

This is Small ribosomal subunit protein eS4 from Methanopyrus kandleri (strain AV19 / DSM 6324 / JCM 9639 / NBRC 100938).